The primary structure comprises 307 residues: F-box protein At2g23160 (307 aa).

The F-box domain occupies Asn-2–Thr-49.

This chain is F-box protein At2g23160, found in Arabidopsis thaliana (Mouse-ear cress).